A 173-amino-acid polypeptide reads, in one-letter code: Protein tyrosine phosphatase type IVA 1 (173 aa).

One can recognise a Tyrosine-protein phosphatase domain in the interval 8–161; that stretch reads APVEVTYKNM…YRPKMRLRFK (154 aa). C49 and C104 are oxidised to a cystine. D72 (proton donor) is an active-site residue. The interaction with ATF5 stretch occupies residues 97 to 132; the sequence is GCCIAVHCVAGLGRAPVLVALALIEGGMKYEDAVQF. The active-site Phosphocysteine intermediate is C104. Residue 105-110 coordinates phosphate; sequence VAGLGR. Position 110 (R110) interacts with substrate. A Cysteine methyl ester modification is found at C170. C170 carries the S-farnesyl cysteine lipid modification. A propeptide spans 171-173 (removed in mature form); the sequence is CIQ.

Belongs to the protein-tyrosine phosphatase family. As to quaternary structure, homotrimer. Interacts with ATF5. Interacts with tubulin. Post-translationally, farnesylated. Farnesylation is required for membrane targeting. Unfarnesylated forms are shifted into the nucleus. Expressed in bone marrow, lymph nodes, T lymphocytes, spleen, thymus and tonsil. Overexpressed in tumor cell lines.

It is found in the cell membrane. The protein localises to the early endosome. Its subcellular location is the endoplasmic reticulum. It localises to the cytoplasm. The protein resides in the cytoskeleton. It is found in the spindle. The protein localises to the nucleus. The enzyme catalyses O-phospho-L-tyrosyl-[protein] + H2O = L-tyrosyl-[protein] + phosphate. Inhibited by sodium orthovanadate and pentamidine. Protein tyrosine phosphatase which stimulates progression from G1 into S phase during mitosis. May play a role in the development and maintenance of differentiating epithelial tissues. Enhances cell proliferation, cell motility and invasive activity, and promotes cancer metastasis. This is Protein tyrosine phosphatase type IVA 1 (PTP4A1) from Homo sapiens (Human).